The sequence spans 38 residues: DNA binding protein VP8 (38 aa).

The span at 1–16 shows a compositional bias: basic residues; it reads MKRKPMSRKASQKTFK. The disordered stretch occupies residues 1–38; it reads MKRKPMSRKASQKTFKKNTGVQRMNHLNPRAMRGGIRL.

The protein belongs to the microviridae J protein family.

It localises to the virion. The protein resides in the host cytoplasm. In terms of biological role, mediates ssDNA packaging into virion, it locates to the internal surface of the capsid, thereby displacing the internal scaffolding protein VP3 during virion formation. Additionally, protein VP8 plays a role in viral attachment to the host cell. The sequence is that of DNA binding protein VP8 from Bdellovibrio phage phiMH2K (Bacteriophage phiMH2K).